Consider the following 137-residue polypeptide: Large ribosomal subunit protein uL14 (137 aa).

It belongs to the universal ribosomal protein uL14 family. As to quaternary structure, part of the 50S ribosomal subunit. Forms a cluster with proteins L3 and L24e, part of which may contact the 16S rRNA in 2 intersubunit bridges.

In terms of biological role, binds to 23S rRNA. Forms part of two intersubunit bridges in the 70S ribosome. In Ignicoccus hospitalis (strain KIN4/I / DSM 18386 / JCM 14125), this protein is Large ribosomal subunit protein uL14.